Reading from the N-terminus, the 622-residue chain is MELFALLIKVAGLLATVTVGANVVSYSRFRRQNLAKFRSPIDESKEVLADFNSIEHEEGKFFFGLATAPAHAEDDLDDAWLQFAKETPCSAEEAEAADKKARRKKVKLAVGAITKGLAKNTHGKEDKNAADKPPSKNVAAWHNAPHAEDRLKFWSDPDKEVKLAKDTGVTVFRMGVDWSRIMPVEPTKGIKEAVNYEAVEHYKWILKKVRSNGMKVMLTLFHHSLPPWAADYGGWKMEKTVDYFMDFTRIVVDSMYDLVDSWVTFNEPHIFTMLTYMCGSWPGNNPDFLEIATSTLPMGVFHRALHWMAVAHSKAYDYIHGKISLKKPLVGVAHHVSFMRPYGLFDIGAVTISNSLTIFPYIDSICEKLDFIGINYYGQEAVCGAGLKLVETDEYSESGRGVYPDGLYRVLLMFHERYKHLKVPFIVTENGVSDETDVIRRPYLIEHLLALYAAMLKGVPVLGYIFWTISDNWEWADGYGPKFGLVAVDRSHDLARTLRQSYHLFSKIVKSGKVTRKDRSLAWNELQKAAKAGKLRPFYRGVDNHNLMYADGLDKPQWRPFVDRDWRFGHYQMDGLQDPLSRVARTLLIWPLIMKKRIRKVKIKHTDDAGLVLHPALASPFD.

Topologically, residues 1 to 3 (MEL) are stromal. The helical; Signal-anchor transmembrane segment at 4-24 (FALLIKVAGLLATVTVGANVV) threads the bilayer. Residues 25-622 (SYSRFRRQNL…LHPALASPFD (598 aa)) are Cytoplasmic-facing. A beta-D-glucoside contacts are provided by residues histidine 222, 266–267 (NE), tyrosine 377, glutamate 429, tryptophan 467, 474–475 (EW), and phenylalanine 483. The Proton donor role is filled by glutamate 267. Catalysis depends on glutamate 429, which acts as the Nucleophile.

Belongs to the glycosyl hydrolase 1 family. Expressed in hypocotyls, cotyledons, stems, leaves, pedicels, sepals, anthers and pistils. Limited expression in roots. Not detected in petals or filaments.

It localises to the plastid. Its subcellular location is the chloroplast. The protein resides in the chloroplast outer membrane. It catalyses the reaction 2 a 1,2-diacyl-3-O-(beta-D-galactosyl)-sn-glycerol = a 1,2-diacyl-3-O-[beta-D-galactosyl-(1-&gt;6)-beta-D-galactosyl]-sn-glycerol + a 1,2-diacyl-sn-glycerol. Its activity is regulated as follows. Induced by MgCl(2). Its function is as follows. Glycosyl hydrolase family protein acting primarily as a highly specific galactosyltransferase. Synthesizes digalactosyldiacylglycerol from monogalactosyldiacylglycerol in the absence of UDP-galactose in vitro. Hydrolyzes o- and p-nitrophenyl beta-D-glucoside in vitro. Plays a role in freezing tolerance. May play a role in chloroplast protection. This Arabidopsis thaliana (Mouse-ear cress) protein is Galactolipid galactosyltransferase SFR2, chloroplastic.